A 403-amino-acid chain; its full sequence is S-adenosylmethionine synthase (403 aa).

Position 17 (H17) interacts with ATP. Residue D19 participates in Mg(2+) binding. Position 45 (E45) interacts with K(+). The L-methionine site is built by E58 and Q101. The segment at 101–111 (QSPDIAMGVDR) is flexible loop. ATP contacts are provided by residues 177 to 179 (DGK), 244 to 245 (RF), D253, 259 to 260 (RK), A276, and K280. L-methionine is bound at residue D253. K284 contributes to the L-methionine binding site.

It belongs to the AdoMet synthase family. In terms of assembly, homotetramer; dimer of dimers. Mg(2+) serves as cofactor. Requires K(+) as cofactor.

The protein localises to the cytoplasm. The enzyme catalyses L-methionine + ATP + H2O = S-adenosyl-L-methionine + phosphate + diphosphate. Its pathway is amino-acid biosynthesis; S-adenosyl-L-methionine biosynthesis; S-adenosyl-L-methionine from L-methionine: step 1/1. Functionally, catalyzes the formation of S-adenosylmethionine (AdoMet) from methionine and ATP. The overall synthetic reaction is composed of two sequential steps, AdoMet formation and the subsequent tripolyphosphate hydrolysis which occurs prior to release of AdoMet from the enzyme. The chain is S-adenosylmethionine synthase from Geobacillus kaustophilus (strain HTA426).